The sequence spans 282 residues: Pyrroline-5-carboxylate reductase (282 aa).

Belongs to the pyrroline-5-carboxylate reductase family.

The catalysed reaction is L-proline + NADP(+) = (S)-1-pyrroline-5-carboxylate + NADPH + 2 H(+). The enzyme catalyses L-proline + NAD(+) = (S)-1-pyrroline-5-carboxylate + NADH + 2 H(+). Its pathway is amino-acid biosynthesis; L-proline biosynthesis; L-proline from L-glutamate 5-semialdehyde: step 1/1. This chain is Pyrroline-5-carboxylate reductase (pro3), found in Schizosaccharomyces pombe (strain 972 / ATCC 24843) (Fission yeast).